The chain runs to 980 residues: Vacuolar protein sorting-associated protein 11 homolog (980 aa).

One copy of the CHCR repeat lies at 407 to 554 (YKETIGMLEP…GRDLLIHARD (148 aa)). The RING-type; atypical zinc-finger motif lies at 803 to 843 (CSACDTPLQLPTVHFLCKHAYHVHCFESYNMDGSDKCPACQ). Residues 886–898 (TKKTKKSEAKKDP) are compositionally biased toward basic and acidic residues. Positions 886-980 (TKKTKKSEAK…APAPSTNPFD (95 aa)) are disordered. Composition is skewed to polar residues over residues 917-937 (TTISRTMSTVSSNMATPSRQR) and 947-960 (TNPFFNSDSGTRLS).

This sequence belongs to the VPS11 family. As to quaternary structure, probable core component of at least two putative endosomal tethering complexes, the homotypic fusion and vacuole protein sorting (HOPS) complex and the class C core vacuole/endosome tethering (CORVET) complex. Their common core is composed of the class C Vps proteins vps-11, vps-16 and vps-18, which in HOPS further associates with vps-33.1, vps-39 and vps-41 and in CORVET with vps-8 and vps-33.2.

Its subcellular location is the late endosome membrane. The protein localises to the lysosome membrane. Functionally, plays a role in vesicle-mediated protein trafficking to lysosomal compartments including the endocytic membrane transport pathways. Believed to act as a core component of the putative HOPS and CORVET endosomal tethering complexes which are proposed to be involved in the rab-5-to-rab-7 endosome conversion probably implicating sand-1, and via binding SNAREs and SNARE complexes to mediate tethering and docking events during SNARE-mediated membrane fusion. The HOPS complex is proposed to be recruited to Rab7 on the late endosomal membrane and to regulate late endocytic, phagocytic and autophagic traffic towards lysosomes. Within the HOPS complex, contributes to the normal development of gut granules in embryonic and adult intestinal cells. The CORVET complex is proposed to function as a Rab5 effector to mediate early endosome fusion probably in specific endosome subpopulations. Required for fusion of endosomes and autophagosomes with lysosomes. Involved in cargo transport from early to late endosomes and required for the transition from early to late endosomes. Possibly has a role in clearance of apoptotic cells during programmed cell death. The sequence is that of Vacuolar protein sorting-associated protein 11 homolog from Caenorhabditis elegans.